A 103-amino-acid chain; its full sequence is Small ribosomal subunit protein uS10 (103 aa).

This sequence belongs to the universal ribosomal protein uS10 family. In terms of assembly, part of the 30S ribosomal subunit.

Involved in the binding of tRNA to the ribosomes. The protein is Small ribosomal subunit protein uS10 of Hahella chejuensis (strain KCTC 2396).